Here is a 188-residue protein sequence, read N- to C-terminus: Der GTPase-activating protein YihI (188 aa).

2 disordered regions span residues 1 to 80 (MKQP…VPVP) and 162 to 188 (DEDDVEREEKQEDILQLLKRGNPKDTF). A compositionally biased stretch (basic and acidic residues) spans 27 to 37 (TRDELDAEARD). A compositionally biased stretch (polar residues) spans 47 to 57 (NRSGARTNVEG).

This sequence belongs to the YihI family. Interacts with Der.

Functionally, a GTPase-activating protein (GAP) that modifies Der/EngA GTPase function. May play a role in ribosome biogenesis. The sequence is that of Der GTPase-activating protein YihI from Yersinia pseudotuberculosis serotype O:1b (strain IP 31758).